Here is a 653-residue protein sequence, read N- to C-terminus: Leucine-rich repeat-containing protein 4 (653 aa).

The N-terminal stretch at 1 to 38 (MKLLWQVTVHHHTWNAILLPFVYLTAQVWILCAAIAAA) is a signal peptide. Residues 39-75 (ASAGPQNCPSVCSCSNQFSKVVCTRRGLSEVPQGIPS) form the LRRNT domain. Over 39–527 (ASAGPQNCPS…SLDEVMKTTK (489 aa)) the chain is Extracellular. 2 disulfide bridges follow: Cys46–Cys52 and Cys50–Cys61. 9 LRR repeats span residues 76–97 (NTRY…TFRH), 100–121 (HLEV…AFNG), 124–145 (SLNT…AFEY), 148–169 (KLRE…AFNR), 172–194 (SLMR…AFEG), 197–218 (NLKY…TPLV), 219–240 (GLEE…SFHG), 243–264 (SLKK…AFDG), and 267–288 (SLVE…LFTP). Residues Asn277, Asn322, Asn363, Asn388, Asn410, Asn434, Asn440, Asn447, and Asn450 are each glycosylated (N-linked (GlcNAc...) asparagine). In terms of domain architecture, LRRCT spans 300–352 (NPWNCDCDILWLAWWLREYIPTNSTCCGRCHAPMHMRGRYLVEVDQASFQCSA). 2 disulfides stabilise this stretch: Cys304-Cys329 and Cys306-Cys350. Positions 353–442 (PFIMDAPRDL…SNASAYLNVS (90 aa)) constitute an Ig-like domain. Cys374 and Cys424 are oxidised to a cystine. The helical transmembrane segment at 528 to 548 (IIIGCFVAVTLLAAAMLIVFY) threads the bilayer. Over 549–653 (KLRKRHQQRS…TKDKVQETQI (105 aa)) the chain is Cytoplasmic.

Interacts with DLG4. Interacts (via LRR repeats) with NTNG2. Forms a complex with DLG4 and with NMDA receptors. In terms of processing, N-glycosylated. As to expression, specifically expressed in brain.

It localises to the membrane. Its subcellular location is the postsynaptic cell membrane. Synaptic adhesion protein. Regulates the formation of exitatory synapses through the recruitment of pre-and-postsynaptic proteins. Organize the lamina/pathway-specific differentiation of dendrites. Plays an important role for auditory synaptic responses. Involved in the suppression of glioma. In Homo sapiens (Human), this protein is Leucine-rich repeat-containing protein 4 (LRRC4).